Reading from the N-terminus, the 687-residue chain is MTLFQKLQWFCQLIRLRAYYKFLLLIAYTLFGAWLFRFYELQADIKRRAIYGNDTNLIRRQLAERWIEMHDDAVLRNNSVLRRRRAAEAVDWLLGELNLSDHMREFSEDTPWTWTGAMFYAGQLYTTIGYGYPTAKTDEGRICTVLYALFGIPCFLMYLKAIGKTLSKRLKKIYKRVRRSAFGKFLLPTRVTATKDGFEDPDASAEERKRKPFPIPIAIILLIIWICFSASMFCQWEKTWDFPSAVYFFIVSISTVGLGDMLFRTPDMMVFNFLLILFGLALLSMCFELITDRIAKWKQKRFDEHIKKVQKMAFQVFEKDPFVEEAPPLGIRMAPNLMQIAATHVSEEKRGFFAELKDWFAGKVTDNVIQSKLEDTDDESDEDEALEEFESPQVATLTANDLVVCTNGGATRRVSKQSYAFSDVSNLSNSKIPPGNNYGQLLDRIKAMEKFKPKKGDLDSRMFAKFLENKKLAKILEQTELRELATVSCQTDLSGLVVQRRNPKGRHARIGSCSSQSTMSTFLPRNNSHAPDEDSVMSITFGDLKFDYITEPLIDEYHLRESNHSIFDFDDDEVVRIPQKMLVSRPGMPPPPPSRPSQLASPLRALLEKEQKYDEDPEIQLTPRRLASLTDVQARKVKLGYDENLQHARLVCGLLPQDFDSPSTSTSTSMIDSGYDLSKRDAPVNIV.

Residues 1 to 21 are Cytoplasmic-facing; sequence MTLFQKLQWFCQLIRLRAYYK. Residues 22-42 form a helical membrane-spanning segment; the sequence is FLLLIAYTLFGAWLFRFYELQ. Residues N53, N77, and N98 are each glycosylated (N-linked (GlcNAc...) asparagine). Positions 112-132 form an intramembrane region, pore-forming; the sequence is WTWTGAMFYAGQLYTTIGYGY. Residues 142–162 form a helical membrane-spanning segment; the sequence is ICTVLYALFGIPCFLMYLKAI. The Cytoplasmic segment spans residues 163–212; the sequence is GKTLSKRLKKIYKRVRRSAFGKFLLPTRVTATKDGFEDPDASAEERKRKP. Residues 213–233 form a helical membrane-spanning segment; the sequence is FPIPIAIILLIIWICFSASMF. Positions 242-262 form an intramembrane region, pore-forming; that stretch reads FPSAVYFFIVSISTVGLGDML. A helical transmembrane segment spans residues 270–290; it reads VFNFLLILFGLALLSMCFELI. At 291–687 the chain is on the cytoplasmic side; the sequence is TDRIAKWKQK…SKRDAPVNIV (397 aa). The tract at residues 661-687 is disordered; that stretch reads SPSTSTSTSMIDSGYDLSKRDAPVNIV. The span at 677–687 shows a compositional bias: basic and acidic residues; it reads LSKRDAPVNIV.

This sequence belongs to the two pore domain potassium channel (TC 1.A.1.8) family.

Its subcellular location is the membrane. This chain is TWiK family of potassium channels protein 12, found in Caenorhabditis briggsae.